The primary structure comprises 409 residues: Arginine deiminase (409 aa).

C399 functions as the Amidino-cysteine intermediate in the catalytic mechanism.

This sequence belongs to the arginine deiminase family.

It is found in the cytoplasm. It catalyses the reaction L-arginine + H2O = L-citrulline + NH4(+). It functions in the pathway amino-acid degradation; L-arginine degradation via ADI pathway; carbamoyl phosphate from L-arginine: step 1/2. In Borrelia duttonii (strain Ly), this protein is Arginine deiminase.